The chain runs to 45 residues: uncharacterized protein (45 aa).

Positions 18 to 45 (RRGRIGVQPSPERRSEVVGPFPLARSLS) are disordered.

This is an uncharacterized protein from Homo sapiens (Human).